The sequence spans 877 residues: DNA mismatch repair protein MutS (877 aa).

630–637 serves as a coordination point for ATP; that stretch reads GPNMAGKS.

It belongs to the DNA mismatch repair MutS family.

In terms of biological role, this protein is involved in the repair of mismatches in DNA. It is possible that it carries out the mismatch recognition step. This protein has a weak ATPase activity. The polypeptide is DNA mismatch repair protein MutS (Jannaschia sp. (strain CCS1)).